Reading from the N-terminus, the 138-residue chain is MIKCTRRIEFDAGHRIIGHQNKCQFLHGHRYVLEIAIAANKTDKLGMVIDFGLIKDVAKKWIDENFDHSLILHQDDKEMGQQIENCTGQKIYYMQNNPTAENIATHLKNEIFPKLFVGQNFFVSNLKLYETPNCFVEV.

His14 serves as a coordination point for Zn(2+). Cys23 serves as the catalytic Proton acceptor. Zn(2+)-binding residues include His27 and His29. Active-site charge relay system residues include His68 and Glu130.

Belongs to the PTPS family. QueD subfamily. Zn(2+) serves as cofactor.

The enzyme catalyses 7,8-dihydroneopterin 3'-triphosphate + H2O = 6-carboxy-5,6,7,8-tetrahydropterin + triphosphate + acetaldehyde + 2 H(+). Its pathway is purine metabolism; 7-cyano-7-deazaguanine biosynthesis. Its function is as follows. Catalyzes the conversion of 7,8-dihydroneopterin triphosphate (H2NTP) to 6-carboxy-5,6,7,8-tetrahydropterin (CPH4) and acetaldehyde. This Rickettsia felis (strain ATCC VR-1525 / URRWXCal2) (Rickettsia azadi) protein is 6-carboxy-5,6,7,8-tetrahydropterin synthase (queD).